Reading from the N-terminus, the 435-residue chain is Eukaryotic translation initiation factor 3 subunit E (435 aa).

The 174-residue stretch at 219–392 (FFNHPKGRDL…GHVVMGTQPL (174 aa)) folds into the PCI domain.

The protein belongs to the eIF-3 subunit E family. In terms of assembly, component of the eukaryotic translation initiation factor 3 (eIF-3) complex. The eIF-3 complex interacts with pix. Interacts with mxt.

The protein localises to the cytoplasm. Functionally, component of the eukaryotic translation initiation factor 3 (eIF-3) complex, which is involved in protein synthesis of a specialized repertoire of mRNAs and, together with other initiation factors, stimulates binding of mRNA and methionyl-tRNAi to the 40S ribosome. The eIF-3 complex specifically targets and initiates translation of a subset of mRNAs involved in cell proliferation. This Drosophila erecta (Fruit fly) protein is Eukaryotic translation initiation factor 3 subunit E (eIF3-S6).